Consider the following 947-residue polypeptide: Serine/threonine-protein kinase PKH2 (947 aa).

The segment covering 1–14 (MHKFRYSLHQHYSK) has biased composition (basic residues). Disordered regions lie at residues 1–43 (MHKF…SSSS), 108–132 (SLGN…LSSH), and 162–212 (FNHL…NEEN). Positions 108–117 (SLGNTTNETG) are enriched in polar residues. The segment covering 187–198 (NTEEEENNDDTD) has biased composition (acidic residues). Residues 199–212 (EIPKSETLKQNEEN) are compositionally biased toward basic and acidic residues. The region spanning 240–502 (FKFGKELGEG…IPEIQKHYFF (263 aa)) is the Protein kinase domain. Residues 250 to 252 (SYS) and lysine 269 each bind ATP. Residues 271-316 (LDKRHIIKEKKVKYVNIEKHALNRLSNRLGVISLYFTFQDKDSLYF) are PIF-pocket. ATP contacts are provided by residues 319–321 (DYA) and glutamate 325. Aspartate 364 functions as the Proton acceptor in the catalytic mechanism. Glutamate 368 and aspartate 382 together coordinate ATP. Low complexity-rich tracts occupy residues 550-579 (VKKS…KGSS) and 618-632 (SSTS…SNSN). Disordered regions lie at residues 550 to 598 (VKKS…STEK), 611 to 644 (KPAT…QQDY), 660 to 686 (SVGS…IHQQ), and 794 to 816 (NMKR…ASTS). The span at 802–811 (DSKKSMDIER) shows a compositional bias: basic and acidic residues.

The protein belongs to the protein kinase superfamily. AGC Ser/Thr protein kinase family. PDPK1 subfamily.

It localises to the nucleus. The protein localises to the cytoplasm. It is found in the cell cortex. It carries out the reaction L-seryl-[protein] + ATP = O-phospho-L-seryl-[protein] + ADP + H(+). It catalyses the reaction L-threonyl-[protein] + ATP = O-phospho-L-threonyl-[protein] + ADP + H(+). Serine/threonine-protein kinase which is part sphingolipid-mediated signaling pathway that is required for the internalization step of endocytosis by regulating eisosome assembly and organization, and modulating the organization of the plasma membrane. Phosphorylates and activates PKC1. Activates YPK1 and YPK2, 2 components of signaling cascade required for maintenance of cell wall integrity. Required for stress-induced P-body assembly and regulates global mRNA decay at the deadenylation step. The protein is Serine/threonine-protein kinase PKH2 of Candida albicans (strain SC5314 / ATCC MYA-2876) (Yeast).